The sequence spans 143 residues: Nuclear transcription factor Y subunit B-4 (143 aa).

The tract at residues 1–23 (MSEGFDGTENGGGGGGGGVGKEQ) is disordered. Residues 9–20 (ENGGGGGGGGVG) are compositionally biased toward gly residues. A DNA-binding region spans residues 27-33 (LPIANIG). The subunit association domain (SAD) stretch occupies residues 54–65 (VQECVSEFISFI). Over residues 117–130 (KGSRASELPVKKDV) the composition is skewed to basic and acidic residues. A disordered region spans residues 117-143 (KGSRASELPVKKDVVLNGDPGSSFEGM).

It belongs to the NFYB/HAP3 subunit family. In terms of assembly, heterotrimeric transcription factor composed of three components, NF-YA, NF-YB and NF-YC. NF-YB and NF-YC must interact and dimerize for NF-YA association and DNA binding. In terms of tissue distribution, ubiquitous.

Its subcellular location is the nucleus. Component of the NF-Y/HAP transcription factor complex. The NF-Y complex stimulates the transcription of various genes by recognizing and binding to a CCAAT motif in promoters. May regulate the expression of photosynthetic genes, and may be involved in chloroplast and amyloplast development. This chain is Nuclear transcription factor Y subunit B-4 (NFYB4), found in Oryza sativa subsp. japonica (Rice).